We begin with the raw amino-acid sequence, 465 residues long: Na(+)-translocating NADH-quinone reductase subunit A (465 aa).

It belongs to the NqrA family. Composed of six subunits; NqrA, NqrB, NqrC, NqrD, NqrE and NqrF.

It carries out the reaction a ubiquinone + n Na(+)(in) + NADH + H(+) = a ubiquinol + n Na(+)(out) + NAD(+). In terms of biological role, NQR complex catalyzes the reduction of ubiquinone-1 to ubiquinol by two successive reactions, coupled with the transport of Na(+) ions from the cytoplasm to the periplasm. NqrA to NqrE are probably involved in the second step, the conversion of ubisemiquinone to ubiquinol. This is Na(+)-translocating NADH-quinone reductase subunit A from Chlamydia muridarum (strain MoPn / Nigg).